The following is a 744-amino-acid chain: Tripartite motif-containing protein 3 (744 aa).

Residue Ala2 is modified to N-acetylalanine. The tract at residues 2-290 (AKREDSPGPE…LAAQAFPERP (289 aa)) is interaction with KIF21B. Ser7 carries the phosphoserine modification. An RING-type zinc finger spans residues 22 to 63 (CSICLDRYRCPKVLPCLHTFCERCLQNYIPPQSLTLSCPVCR). The B box-type zinc-finger motif lies at 110–151 (GRPLSCPNHEGKTMEFYCEACETAMCGECRAGEHREHGTVLL). Zn(2+) is bound by residues Cys115, His118, Cys138, and His143. The stretch at 153-224 (DVVEQHKAAL…RKQALVSDLE (72 aa)) forms a coiled coil. Residues 317-418 (TTSAAAHETV…VRGSPFRVRA (102 aa)) form a Filamin repeat. Residues 420–462 (RPGDLPPSPDDVKRRVKSPGGPGSHVRQKAVRRPSSMYSTGGK) are disordered. Position 427 is a phosphoserine (Ser427). NHL repeat units follow at residues 473–516 (VFRV…FSNE), 520–563 (KFRF…FSPE), 564–605 (GKFK…FQPN), 609–652 (VGRF…YSAD), 656–699 (LFKF…FDSS), and 700–743 (GSFL…YRYL).

This sequence belongs to the TRIM/RBCC family. In terms of assembly, forms homooligomers. Interacts with TRIM2; this interaction reduces TRIM2 activity. Associates with myosin-Vb (MYO5B) and alpha-actinin-4 (ACTN4). Component of the CART complex, at least composed of ACTN4, HGS/HRS, MYO5B and TRIM3. Interacts with ZFYVE28/LST2. Interacts with KIF21B. In terms of tissue distribution, highly expressed in the brain, moderate levels in the lung, very low levels in the liver, kidney and heart. In the brain, expression was highest in the cerebellum. Expression in the brain is found at low levels at embryonic day 15 and then increases during the first two postnatal weeks before decreasing through adulthood.

Its subcellular location is the cytoplasm. It is found in the early endosome. The protein localises to the golgi apparatus. It localises to the trans-Golgi network. The protein resides in the cell projection. Its subcellular location is the dendrite. The catalysed reaction is S-ubiquitinyl-[E2 ubiquitin-conjugating enzyme]-L-cysteine + [acceptor protein]-L-lysine = [E2 ubiquitin-conjugating enzyme]-L-cysteine + N(6)-ubiquitinyl-[acceptor protein]-L-lysine.. In terms of biological role, E3 ubiquitin ligase that plays essential roles in neuronal functions such as regulation of neuronal plasticity, learning, and memory. In addition to its neuronal functions, participates in other biological processes such as innate immunity or cell cycle regulation. Component of the cytoskeleton-associated recycling or transport complex in neurons, polyubiquitinates gamma-actin, thus regulating neuronal plasticity, learning, and memory. Ubiquitinates postsynaptic scaffold GKAP, a neuronal substrate involved in synaptic remodeling and thereby modulates dendritic spine morphology. Positively regulates motility of microtubule-dependent motor protein KIF21B. Induces growth arrest via its RING-dependent E3 ligase activity and ubiquinates CDKN1A. Positively regulates TLR3-mediated signaling by mediating 'Lys-63'-linked polyubiquitination of TLR3. In turn, promotes the recognition and sorting of polyubiquitinated TLR3 by the ESCRT complexes. The chain is Tripartite motif-containing protein 3 (Trim3) from Rattus norvegicus (Rat).